Consider the following 85-residue polypeptide: Conotoxin Mi15b (85 aa).

The signal sequence occupies residues 1 to 23 (MEKLTVLILVAIVLLTIQVLGQS). A propeptide spanning residues 24–49 (DRDKHPKRRPRQYATKRLSALMKGHR) is cleaved from the precursor. Q50 carries the pyrrolidone carboxylic acid modification.

The protein belongs to the conotoxin O2 superfamily. Post-translationally, contains 4 disulfide bonds. As to expression, expressed by the venom duct.

The protein localises to the secreted. This Conus miles (Soldier cone) protein is Conotoxin Mi15b.